The sequence spans 185 residues: Glycerol-3-phosphate acyltransferase 4 (185 aa).

6 helical membrane passes run 1–21 (MPLL…AYLA), 47–67 (LGRG…SLAI), 69–89 (LALA…AAVL), 113–133 (LLIA…VLLF), 137–157 (VIAA…LYGL), and 158–178 (PGGV…THFI).

This sequence belongs to the PlsY family. Probably interacts with PlsX.

Its subcellular location is the cell membrane. The enzyme catalyses an acyl phosphate + sn-glycerol 3-phosphate = a 1-acyl-sn-glycero-3-phosphate + phosphate. Its pathway is lipid metabolism; phospholipid metabolism. Functionally, catalyzes the transfer of an acyl group from acyl-phosphate (acyl-PO(4)) to glycerol-3-phosphate (G3P) to form lysophosphatidic acid (LPA). This enzyme utilizes acyl-phosphate as fatty acyl donor, but not acyl-CoA or acyl-ACP. The polypeptide is Glycerol-3-phosphate acyltransferase 4 (Dehalococcoides mccartyi (strain ATCC BAA-2266 / KCTC 15142 / 195) (Dehalococcoides ethenogenes (strain 195))).